The following is a 491-amino-acid chain: Adenylosuccinate synthetase, chloroplastic (491 aa).

Residues 78 to 84 (GDEGKGK) and 106 to 108 (GHT) each bind GTP. Residue Asp-79 is the Proton acceptor of the active site. Mg(2+) contacts are provided by Asp-79 and Gly-106. IMP contacts are provided by residues 79 to 82 (DEGK), 104 to 107 (NAGH), Thr-196, Arg-210, Gln-290, Thr-305, and Arg-369. The active-site Proton donor is His-107. Residue 365-371 (TTTGRPR) participates in substrate binding. GTP-binding positions include Arg-371, 397–399 (KLD), and 480–482 (GIG).

This sequence belongs to the adenylosuccinate synthetase family. In terms of assembly, homodimer. Mg(2+) is required as a cofactor.

The protein resides in the plastid. Its subcellular location is the chloroplast. The enzyme catalyses IMP + L-aspartate + GTP = N(6)-(1,2-dicarboxyethyl)-AMP + GDP + phosphate + 2 H(+). The protein operates within purine metabolism; AMP biosynthesis via de novo pathway; AMP from IMP: step 1/2. Plays an important role in the de novo pathway and in the salvage pathway of purine nucleotide biosynthesis. Catalyzes the first committed step in the biosynthesis of AMP from IMP. In Populus trichocarpa (Western balsam poplar), this protein is Adenylosuccinate synthetase, chloroplastic.